A 74-amino-acid chain; its full sequence is Turripeptide OL135 (74 aa).

The signal sequence occupies residues Met1 to Gly20. A propeptide spanning residues Tyr21–Xaa28 is cleaved from the precursor.

The protein belongs to the conopeptide P-like superfamily. In terms of processing, contains 3 disulfide bonds. As to expression, expressed by the venom duct.

It localises to the secreted. Its function is as follows. Acts as a neurotoxin by inhibiting an ion channel. The polypeptide is Turripeptide OL135 (Iotyrris olangoensis (Sea snail)).